Consider the following 300-residue polypeptide: Forkhead transcription factor fkh-9 (300 aa).

The segment at residues 66 to 161 (RPSLSYKDLI…DKQTLRRRNR (96 aa)) is a DNA-binding region (fork-head). The tract at residues 153–208 (KQTLRRRNRQQPRALAKKSDAGRTLSRDDRGSSGSGETSPSPSQPSISPPNENPMP) is disordered. Positions 169-183 (KKSDAGRTLSRDDRG) are enriched in basic and acidic residues. Low complexity predominate over residues 187–198 (SGETSPSPSQPS).

Expressed in mechanosensory neurons.

It is found in the nucleus. Transcription factor. Binds to the regulatory elements of genes that contain the sequence motif 5'-TTGTTTCT-3'. Involved in regulating intestinal transcription of vitellogenin vit-2, acting in concert with transcription factors elt-2, mab-3 and daf-16, and also the TGF-beta/Sma/Mab pathway. Functions downstream of the insulin/IGF-1-like signaling (IIS) mediated pathway, in regeneration of axons after injury and in short-term memory, perhaps acting in neurons, and in modulation of longevity, perhaps acting non-neuronally. Plays a role in the modulation of endoplasmic reticulum (ER) homeostasis during chemical and pathogen stress, including exposure to the Gram-negative bacterium P.aeruginosa. The chain is Forkhead transcription factor fkh-9 from Caenorhabditis elegans.